We begin with the raw amino-acid sequence, 125 residues long: Unclassified hydrophobin 8 (125 aa).

An N-terminal signal peptide occupies residues 1 to 20; it reads MMFSKPVVLATTALATFAAA. 4 disulfide bridges follow: Cys31–Cys105, Cys38–Cys99, Cys39–Cys90, and Cys106–Cys119.

The protein belongs to the fungal hydrophobin family. Self-assembles to form functional amyloid fibrils called rodlets. Self-assembly into fibrillar rodlets occurs spontaneously at hydrophobic:hydrophilic interfaces and the rodlets further associate laterally to form amphipathic monolayers.

Its subcellular location is the secreted. The protein resides in the cell wall. Its function is as follows. Aerial growth, conidiation, and dispersal of filamentous fungi in the environment rely upon a capability of their secreting small amphipathic proteins called hydrophobins (HPBs) with low sequence identity. Class I can self-assemble into an outermost layer of rodlet bundles on aerial cell surfaces, conferring cellular hydrophobicity that supports fungal growth, development and dispersal; whereas Class II form highly ordered films at water-air interfaces through intermolecular interactions but contribute nothing to the rodlet structure. Hydph8 is an unclassified hydrophobin involved in mycelial growth. The protein is Unclassified hydrophobin 8 of Pleurotus ostreatus (strain PC15) (Oyster mushroom).